A 257-amino-acid chain; its full sequence is Ig delta chain C region secreted form (257 aa).

One can recognise an Ig-like 1 domain in the interval 5–105; sequence PDMFLLSECK…WDSQSSKRVT (101 aa). Cysteine 26 and cysteine 78 are disulfide-bonded. Residues asparagine 58 and asparagine 75 are each glycosylated (N-linked (GlcNAc...) asparagine). Positions 89–111 are disordered; it reads PFKFPESWDSQSSKRVTPTLQAK. Residues 96 to 111 are compositionally biased toward polar residues; that stretch reads WDSQSSKRVTPTLQAK. N-linked (GlcNAc...) asparagine glycosylation is found at asparagine 112, asparagine 135, and asparagine 227. An Ig-like 2 domain is found at 133–233; that stretch reads PSNLTVNILT…TKLNASKSLA (101 aa).

As to expression, cell lines producing IgD contain several mRNA species for Ig delta chains. In plasmacytomas, the secreted form is the major component, and the membrane-bound form is a minor component. In spleen, however, the membrane-bound form is the major component. These two forms differ in their C-terminal segments.

It localises to the secreted. The sequence is that of Ig delta chain C region secreted form from Mus musculus (Mouse).